The sequence spans 1942 residues: Probable helicase with zinc finger domain (1942 aa).

The C3H1-type zinc finger occupies 178 to 206 (SEEYTLCKRFLEQGICRYGAQCTSAHSQE). Phosphoserine is present on Ser-248. ATP is bound at residue 668-675 (GPYGTGKT). A DEAA box motif is present at residues 794–797 (DEAA). The segment covering 1117–1127 (SGSTNKQQQSP) has biased composition (polar residues). Residues 1117-1141 (SGSTNKQQQSPPKGKSLHHTQNDHF) are disordered. Thr-1163 carries the post-translational modification Phosphothreonine. Arg-1245 is subject to Omega-N-methylarginine. Disordered regions lie at residues 1246 to 1345 (GSPI…INLP), 1386 to 1429 (NLPE…GPNN), 1527 to 1552 (QGSA…GLHQ), and 1608 to 1637 (RQVQ…FNDN). Basic and acidic residues-rich tracts occupy residues 1268 to 1281 (HQEK…RNGK) and 1292 to 1308 (NKIR…KQVD). The span at 1399 to 1412 (NQVVQQQSQLNQQP) shows a compositional bias: low complexity. Ser-1614 carries the post-translational modification Phosphoserine. Positions 1623–1636 (SSTDHSSHFSNFND) are enriched in low complexity. 4 positions are modified to phosphoserine: Ser-1645, Ser-1738, Ser-1741, and Ser-1766. 3 disordered regions span residues 1729-1779 (FHPL…TPQD), 1792-1843 (NQSS…PEDQ), and 1870-1942 (MPNK…SYFK). Low complexity predominate over residues 1731 to 1745 (PLSSRTVSSSSLPSL). Polar residues-rich tracts occupy residues 1761–1779 (RISS…TPQD) and 1792–1825 (NQSS…SRTA). Composition is skewed to low complexity over residues 1876–1888 (AESA…QSSA) and 1920–1942 (LSLF…SYFK).

The protein belongs to the DNA2/NAM7 helicase family. In terms of assembly, interacts with SMYD2. Interacts with POLR2A. Interacts with SMYD3; the interaction may bridge SMYD3 and RNA polymerase II. As to expression, expressed predominantly in thymus and brain. Expression is down-regulated in 28 of 95 tested cancer cell lines.

The protein localises to the nucleus. May act as a helicase that plays a role in RNA metabolism in multiple tissues and organs within the developing embryo. This Homo sapiens (Human) protein is Probable helicase with zinc finger domain (HELZ).